The sequence spans 547 residues: Methionine--tRNA ligase (547 aa).

Residues 15–25 (PYANGSIHIGH) carry the 'HIGH' region motif. Residues C146, C149, C159, and C162 each contribute to the Zn(2+) site. The short motif at 332 to 336 (KLSKS) is the 'KMSKS' region element. K335 contacts ATP.

The protein belongs to the class-I aminoacyl-tRNA synthetase family. MetG type 1 subfamily. As to quaternary structure, monomer. Zn(2+) is required as a cofactor.

The protein resides in the cytoplasm. The catalysed reaction is tRNA(Met) + L-methionine + ATP = L-methionyl-tRNA(Met) + AMP + diphosphate. Its function is as follows. Is required not only for elongation of protein synthesis but also for the initiation of all mRNA translation through initiator tRNA(fMet) aminoacylation. The protein is Methionine--tRNA ligase (metG) of Buchnera aphidicola subsp. Acyrthosiphon pisum (strain APS) (Acyrthosiphon pisum symbiotic bacterium).